Consider the following 293-residue polypeptide: MASITLTPSEKDIQAFLEHYQTSLAPSKNPYIRYFLKLPQATVSIYTSGKILLQGEGAEKYASFFGYQAVEQTSGQNLPLIGTDEVGNGSYFGGLAVVAAFVTPDQHDFLRKLGVGDSKTLTDQKIRQIAPILKEKIQHQALLLSPSKYNEVIGNRYNAVSVKVALHNQAIYLLLQKGVQPEKIVIDAFTSAKNYDKYLAQETNRFSNPISLEEKAEGKYLAVAVSSVIARDLFLENLENLGRELGYQLPSGAGTASDKVASQILQAYGMQGLNFCAKLHFKNTEKAKKRLER.

The RNase H type-2 domain maps to 78–293 (LPLIGTDEVG…TEKAKKRLER (216 aa)). Positions 84, 85, and 187 each coordinate a divalent metal cation.

It belongs to the RNase HII family. RnhC subfamily. Mn(2+) is required as a cofactor. Mg(2+) serves as cofactor.

The protein localises to the cytoplasm. It catalyses the reaction Endonucleolytic cleavage to 5'-phosphomonoester.. In terms of biological role, endonuclease that specifically degrades the RNA of RNA-DNA hybrids. The sequence is that of Ribonuclease HIII from Streptococcus pneumoniae (strain Taiwan19F-14).